The primary structure comprises 153 residues: Ribosomal RNA large subunit methyltransferase H (153 aa).

Residues Leu-71 and Gly-102 each contribute to the S-adenosyl-L-methionine site.

It belongs to the RNA methyltransferase RlmH family. Homodimer.

It is found in the cytoplasm. The catalysed reaction is pseudouridine(1915) in 23S rRNA + S-adenosyl-L-methionine = N(3)-methylpseudouridine(1915) in 23S rRNA + S-adenosyl-L-homocysteine + H(+). Functionally, specifically methylates the pseudouridine at position 1915 (m3Psi1915) in 23S rRNA. The chain is Ribosomal RNA large subunit methyltransferase H from Anaeromyxobacter dehalogenans (strain 2CP-1 / ATCC BAA-258).